A 367-amino-acid polypeptide reads, in one-letter code: Ferrochelatase (367 aa).

The Fe cation site is built by His226 and Glu307.

This sequence belongs to the ferrochelatase family.

Its subcellular location is the cytoplasm. It carries out the reaction heme b + 2 H(+) = protoporphyrin IX + Fe(2+). It participates in porphyrin-containing compound metabolism; protoheme biosynthesis; protoheme from protoporphyrin-IX: step 1/1. Functionally, catalyzes the ferrous insertion into protoporphyrin IX. The polypeptide is Ferrochelatase (Burkholderia pseudomallei (strain 1106a)).